The chain runs to 85 residues: uncharacterized protein (85 aa).

This is an uncharacterized protein from Saccharomyces cerevisiae (strain ATCC 204508 / S288c) (Baker's yeast).